The following is a 600-amino-acid chain: DDB1- and CUL4-associated factor 15 (600 aa).

The tract at residues 1–29 is disordered; the sequence is MAPSSKSERNSGAGSAGGGPGGTGGKRAV. A compositionally biased stretch (gly residues) spans 14 to 27; sequence GSAGGGPGGTGGKR. Serine 50 carries the phosphoserine modification. Zn(2+) contacts are provided by cysteine 193, cysteine 196, cysteine 211, and histidine 214. Position 314 is a phosphoserine (serine 314). Over residues 334-343 the composition is skewed to basic and acidic residues; that stretch reads AKGSPLEETR. The tract at residues 334-384 is disordered; it reads AKGSPLEETRLPSSLGPSSSRCRPSLEPQAPSGEVVPRDSPPAAETTAPEP. Low complexity-rich tracts occupy residues 344-359 and 374-384; these read LPSSLGPSSSRCRPSL and PPAAETTAPEP.

Component of the DCX(DCAF15) complex, also named CLR4(DCAF15) complex, composed of DCAF15, DDB1, cullin-4 (CUL4A or CUL4B), DDA1 and RBX1.

It participates in protein modification; protein ubiquitination. Its function is as follows. Substrate-recognition component of the DCX(DCAF15) complex, a cullin-4-RING E3 ubiquitin-protein ligase complex that mediates ubiquitination and degradation of target proteins. The DCX(DCAF15) complex acts as a regulator of the natural killer (NK) cells effector functions, possibly by mediating ubiquitination and degradation of cohesin subunits SMC1A and SMC3. May play a role in the activation of antigen-presenting cells (APC) and their interaction with NK cells. This chain is DDB1- and CUL4-associated factor 15, found in Mus musculus (Mouse).